A 312-amino-acid chain; its full sequence is Glyoxylate/hydroxypyruvate reductase A (312 aa).

Arg227 is an active-site residue. His275 acts as the Proton donor in catalysis.

It belongs to the D-isomer specific 2-hydroxyacid dehydrogenase family. GhrA subfamily.

Its subcellular location is the cytoplasm. The catalysed reaction is glycolate + NADP(+) = glyoxylate + NADPH + H(+). The enzyme catalyses (R)-glycerate + NAD(+) = 3-hydroxypyruvate + NADH + H(+). It catalyses the reaction (R)-glycerate + NADP(+) = 3-hydroxypyruvate + NADPH + H(+). Catalyzes the NADPH-dependent reduction of glyoxylate and hydroxypyruvate into glycolate and glycerate, respectively. This Shigella dysenteriae serotype 1 (strain Sd197) protein is Glyoxylate/hydroxypyruvate reductase A.